A 346-amino-acid chain; its full sequence is Biotin synthase (346 aa).

The 225-residue stretch at asparagine 40–serine 264 folds into the Radical SAM core domain. [4Fe-4S] cluster is bound by residues cysteine 55, cysteine 59, and cysteine 62. [2Fe-2S] cluster-binding residues include cysteine 99, cysteine 130, cysteine 190, and arginine 262.

This sequence belongs to the radical SAM superfamily. Biotin synthase family. In terms of assembly, homodimer. [4Fe-4S] cluster is required as a cofactor. Requires [2Fe-2S] cluster as cofactor.

The catalysed reaction is (4R,5S)-dethiobiotin + (sulfur carrier)-SH + 2 reduced [2Fe-2S]-[ferredoxin] + 2 S-adenosyl-L-methionine = (sulfur carrier)-H + biotin + 2 5'-deoxyadenosine + 2 L-methionine + 2 oxidized [2Fe-2S]-[ferredoxin]. Its pathway is cofactor biosynthesis; biotin biosynthesis; biotin from 7,8-diaminononanoate: step 2/2. In terms of biological role, catalyzes the conversion of dethiobiotin (DTB) to biotin by the insertion of a sulfur atom into dethiobiotin via a radical-based mechanism. This is Biotin synthase from Colwellia psychrerythraea (strain 34H / ATCC BAA-681) (Vibrio psychroerythus).